Consider the following 568-residue polypeptide: NADPH oxidase 3 (568 aa).

Over 1-12 the chain is Cytoplasmic; sequence MPTCWILNESVS. A helical membrane pass occupies residues 13–33; sequence FVVALLWLAINIYLFIDTFCW. Over 34-49 the chain is Extracellular; that stretch reads YAEEESFFYTRVILGS. The helical transmembrane segment at 50–70 threads the bilayer; that stretch reads ALAWARASAVCLNFNCMLILL. Residues 55 to 284 enclose the Ferric oxidoreductase domain; sequence RASAVCLNFN…VVLYACEIII (230 aa). Residues 71-103 lie on the Cytoplasmic side of the membrane; sequence PVSRNFVSLVRGTSVCCRGPWRRQLDKNLKFHK. Residues 104–124 form a helical membrane-spanning segment; sequence LVAYGIAVNSVIHIVAHLFNL. Residues 125-167 are Extracellular-facing; sequence ERYHLGQAKDAEGLLAALSKLGNAPNESYLNPVRTLYTGTTTQ. Residues 168–188 form a helical membrane-spanning segment; sequence LLMTVSGITGLVISLALILIM. The Cytoplasmic portion of the chain corresponds to 189–201; the sequence is TSSTEFIRQSSYE. A helical membrane pass occupies residues 202–222; that stretch reads LFWYTHHIFIFLFISLAIHGG. Topologically, residues 223-395 are extracellular; that stretch reads GRIIRGQTPE…DGPFGGSLAD (173 aa). Asn238 carries an N-linked (GlcNAc...) asparagine glycan. Positions 285 to 395 constitute an FAD-binding FR-type domain; the sequence is RFWRSHQEVV…DGPFGGSLAD (111 aa). The chain crosses the membrane as a helical span at residues 396-416; the sequence is VFHYPVSVCIATGIGVTPFAS. The Cytoplasmic segment spans residues 417-568; it reads LLKSVWYKCC…VHFYYNKENF (152 aa).

In terms of assembly, forms a heterodimer with CYBA/p22phox which is essential for its activity and cell membrane localization. Heme serves as cofactor. N-glycosylated in a CYBA/p22phox-dependent manner. As to expression, expressed in the inner ear by the spiral glanglia and the organ of Corti.

The protein resides in the cell membrane. It catalyses the reaction NADPH + 2 O2 = 2 superoxide + NADP(+) + H(+). Its activity is regulated as follows. Activated by the ototoxic drug cisplatin. Activated by NOXO1. Cooperatively activated by NCF1 and NCF2 or NOXA1 in a phorbol 12-myristate 13-acetate (PMA)-dependent manner. Inhibited by diphenyleneiodonium chloride. In terms of biological role, NADPH oxidase that catalyzes the generation of superoxide from molecular oxygen utilizing NADPH as an electron donor, upon formation of a complex with CYBA/p22phox. Plays a role in the biogenesis of otoconia/otolith, which are crystalline structures of the inner ear involved in the perception of gravity. The chain is NADPH oxidase 3 (Nox3) from Rattus norvegicus (Rat).